The following is a 426-amino-acid chain: Serine--tRNA ligase (426 aa).

An L-serine-binding site is contributed by 232-234 (TAE). 263-265 (RSE) is an ATP binding site. Position 286 (Glu-286) interacts with L-serine. An ATP-binding site is contributed by 350 to 353 (EISS). Residue Ser-385 participates in L-serine binding.

It belongs to the class-II aminoacyl-tRNA synthetase family. Type-1 seryl-tRNA synthetase subfamily. As to quaternary structure, homodimer. The tRNA molecule binds across the dimer.

Its subcellular location is the cytoplasm. It catalyses the reaction tRNA(Ser) + L-serine + ATP = L-seryl-tRNA(Ser) + AMP + diphosphate + H(+). The enzyme catalyses tRNA(Sec) + L-serine + ATP = L-seryl-tRNA(Sec) + AMP + diphosphate + H(+). The protein operates within aminoacyl-tRNA biosynthesis; selenocysteinyl-tRNA(Sec) biosynthesis; L-seryl-tRNA(Sec) from L-serine and tRNA(Sec): step 1/1. Catalyzes the attachment of serine to tRNA(Ser). Is also able to aminoacylate tRNA(Sec) with serine, to form the misacylated tRNA L-seryl-tRNA(Sec), which will be further converted into selenocysteinyl-tRNA(Sec). The sequence is that of Serine--tRNA ligase from Pediococcus pentosaceus (strain ATCC 25745 / CCUG 21536 / LMG 10740 / 183-1w).